The following is a 72-amino-acid chain: Translation initiation factor IF-1 (72 aa).

One can recognise an S1-like domain in the interval 1-72 (MAKEDMIEVE…TRGRITYRFK (72 aa)).

The protein belongs to the IF-1 family. Component of the 30S ribosomal translation pre-initiation complex which assembles on the 30S ribosome in the order IF-2 and IF-3, IF-1 and N-formylmethionyl-tRNA(fMet); mRNA recruitment can occur at any time during PIC assembly.

It localises to the cytoplasm. Functionally, one of the essential components for the initiation of protein synthesis. Stabilizes the binding of IF-2 and IF-3 on the 30S subunit to which N-formylmethionyl-tRNA(fMet) subsequently binds. Helps modulate mRNA selection, yielding the 30S pre-initiation complex (PIC). Upon addition of the 50S ribosomal subunit IF-1, IF-2 and IF-3 are released leaving the mature 70S translation initiation complex. The polypeptide is Translation initiation factor IF-1 (Enterococcus faecalis (strain ATCC 700802 / V583)).